A 410-amino-acid chain; its full sequence is MGLWLVLANQVGLVGTLVLVVCFTPANSLVRPLLLPGITALVSYGLILNKEAIANAGAWSLVNLNTAGLFLQYLDVGLISRWTYSAYGPTSSRGGQPNASLDLAGRKKPPSSSLLSRLQWGFSTATSWRAPSTVWEAKGTPHFEELPSRGRFLARNAMTLLWSVLVLDVMGLVGGDLDPVANAAHFTWDRVRFLARLGDVSRDEVILRATVVYMRWGAMYFSLQVVYSFLAIVFVMVGLSPVQRWPPLFGSFTEIYTLRNTWGKAWHQLIRQKVSSPAHYTTYSLLGLRKGGIAGRYTCILATFFVSGLLHLFCAEYSYGIQWDQSGTLRFYSIQALGIAMEDAVQATSRRLFAYRSTYWTRAIGYVWVLLWFLWTSPAYFFPLLKYDTEKRPPVLLGPIETWLQSRHVQ.

Transmembrane regions (helical) follow at residues 3-23 (LWLV…VVCF), 28-48 (SLVR…GLIL), and 59-79 (WSLV…VGLI). The span at 90-99 (TSSRGGQPNA) shows a compositional bias: polar residues. The interval 90-112 (TSSRGGQPNASLDLAGRKKPPSS) is disordered. A glycan (N-linked (GlcNAc...) asparagine) is linked at N98. 4 helical membrane passes run 157–177 (AMTL…GGDL), 219–239 (MYFS…MVGL), 300–320 (ILAT…YSYG), and 364–384 (IGYV…FFPL).

The protein belongs to the wax synthase family.

It is found in the membrane. The protein operates within polyketide biosynthesis. Its function is as follows. Acetyltransferase; part of the gene cluster that mediates the biosynthesis of aurovertins, fungal polyketides that exhibit potent inhibition of adenosine triphosphate synthase. Tha biosynthesis starts with the HR-PKS aurA that selects propionate as the starter unit; synthesizes a hexa-ene chain through the repeated functions of the KR and DH domains in the first six iterations; selectively introduces three alpha-methyl substitutions at C4, C6, and C16 using the S-adensylmethionine-dependent cMET; and shuts off KR and DH in the last three iterations to afford a 1,3,5-triketo portion that can undergo intramolecular cyclization to yield the alpha-pyrone intermediate. AurE may act as a cyclase and enhances the rate of pyrone formation and product release of aurA. The methyltransferase aurB then methylates the C17 hydroxyl group. C17 methylation is required to initiate epoxidation by the downstream monooxygenase aurC. The monooxygenase aurC and the epoxide hydrolase aurD can iteratively transform the terminal triene portion of the methylated precursor into the dioxabicyclo[3.2.1]octane scaffold of aurovertin E. Epoxidation modifications of the precursor occur in two separate steps; bis-epoxidation of the two terminal olefins takes place first, followed by another epoxidation that occurs at C7-C8 after tetrahydrofuran formation. The O-acyltransferase aurG converts aurovertin E to aurovertin A. This chain is Acetyltransferase aurG, found in Calcarisporium arbuscula (Dendryphion arbuscula).